Here is a 180-residue protein sequence, read N- to C-terminus: MPTKALGETLNEYVVVGRKIPTEKEPVTPIWKMQIFATNHVIAKSRFWYFVSMLRRVKKANGEILSIKQVFEKNPGTVKNYGVWLKYDSRTGHHNMYREYRDTTVAGAVTQCYRDMGARHRAQADRIHILKVQTVKAEDTKRAGIKMFHDAKIRFPLPHRVTKRKNLSVFTTARQNTHFA.

The protein belongs to the eukaryotic ribosomal protein eL20 family.

This is Large ribosomal subunit protein eL20 from Caenorhabditis elegans.